The sequence spans 345 residues: D-alanine--D-alanine ligase (345 aa).

Residues 137–342 form the ATP-grasp domain; that stretch reads KAAFSAAGLP…LEELVHQLLE (206 aa). Residue 169 to 224 participates in ATP binding; sequence ETQLGYPCFIKPANLGSSVGISKATNRSELQAGLDLAASHDSRLLVEKGLQVRELE. Positions 295, 309, and 311 each coordinate Mg(2+).

The protein belongs to the D-alanine--D-alanine ligase family. Requires Mg(2+) as cofactor. The cofactor is Mn(2+).

It is found in the cytoplasm. It catalyses the reaction 2 D-alanine + ATP = D-alanyl-D-alanine + ADP + phosphate + H(+). The protein operates within cell wall biogenesis; peptidoglycan biosynthesis. Its function is as follows. Cell wall formation. This Synechococcus sp. (strain RCC307) protein is D-alanine--D-alanine ligase.